A 1178-amino-acid chain; its full sequence is MLKFRTVHGGLRLLGIRRTSTAPAASPNVRRLEYKPIKKVMVANRGEIAIRVFRACTELGIRTVAIYSEQDTGQMHRQKADEAYLIGRGLAPVQAYLHIPDIIKVAKENNVDAVHPGYGFLSERADFAQACQDAGVRFIGPSPEVVRKMGDKVEARAIAIAAGVPVVPGTDAPITSLHEAHEFSNTYGFPIIFKAAYGGGGRGMRVVHSYEELEENYTRAYSEALAAFGNGALFVEKFIEKPRHIEVQILGDQYGNILHLYERDCSIQRRHQKVVEIAPAAHLDPQLRTRLTSDSVKLAKQVGYENAGTVEFLVDRHGKHYFIEVNSRLQVEHTVTEEITDVDLVHAQIHVAEGRSLPDLGLRQENIRINGCAIQCRVTTEDPARSFQPDTGRIEVFRSGEGMGIRLDNASAFQGAVISPHYDSLLVKVIAHGKDHPTAATKMSRALAEFRVRGVKTNIAFLQNVLNNQQFLAGTVDTQFIDENPELFQLRPAQNRAQKLLHYLGHVMVNGPTTPIPVKASPSPTDPVVPAVPIGPPPAGFRDILLREGPEGFARAVRNHPGLLLMDTTFRDAHQSLLATRVRTHDLKKIAPYVAHNFSKLFSMENWGGATFDVAMRFLYECPWRRLQELRELIPNIPFQMLLRGANAVGYTNYPDNVVFKFCEVAKENGMDVFRVFDSLNYLPNMLLGMEAAGSAGGVVEAAISYTGDVADPSRTKYSLQYYMGLAEELVRAGTHILCIKDMAGLLKPTACTMLVSSLRDRFPDLPLHIHTHDTSGAGVAAMLACAQAGADVVDVAADSMSGMTSQPSMGALVACTRGTPLDTEVPMERVFDYSEYWEGARGLYAAFDCTATMKSGNSDVYENEIPGGQYTNLHFQAHSMGLGSKFKEVKKAYVEANQMLGDLIKVTPSSKIVGDLAQFMVQNGLSRAEAEAQAEELSFPRSVVEFLQGYIGVPHGGFPEPFRSKVLKDLPRVEGRPGASLPPLDLQALEKELVDRHGEEVTPEDVLSAAMYPDVFAHFKDFTATFGPLDSLNTRLFLQGPKIAEEFEVELERGKTLHIKALAVSDLNRAGQRQVFFELNGQLRSILVKDTQAMKEMHFHPKALKDVKGQIGAPMPGKVIDIKVVAGAKVAKGQPLCVLSAMKMETVVTSPMEGTVRKVHVTKDMTLEGDDLILEIE.

A mitochondrion-targeting transit peptide spans 1–20; that stretch reads MLKFRTVHGGLRLLGIRRTS. N6-acetyllysine occurs at positions 35 and 39. Residues 36 to 486 enclose the Biotin carboxylation domain; the sequence is PIKKVMVANR…DTQFIDENPE (451 aa). N6-acetyllysine; alternate is present on lysine 79. Residue lysine 79 is modified to N6-succinyllysine; alternate. N6-acetyllysine is present on residues lysine 148 and lysine 152. The ATP site is built by lysine 152 and glutamate 236. One can recognise an ATP-grasp domain in the interval 156–353; sequence RAIAIAAGVP…LVHAQIHVAE (198 aa). At lysine 241 the chain carries N6-acetyllysine. Histidine 271 provides a ligand contact to ATP. 2 positions are modified to N6-acetyllysine: lysine 297 and lysine 319. Residue arginine 328 is part of the active site. Lysine 434 carries the N6-acetyllysine modification. Lysine 442 carries the post-translational modification N6-succinyllysine. Positions 563–832 constitute a Pyruvate carboxyltransferase domain; the sequence is LLLMDTTFRD…DTEVPMERVF (270 aa). 571-575 contacts substrate; sequence RDAHQ. A Mn(2+)-binding site is contributed by aspartate 572. An N6-acetyllysine modification is found at lysine 589. Substrate is bound at residue arginine 644. N6-acetyllysine occurs at positions 661 and 717. Mn(2+) is bound at residue lysine 741. Lysine 741 carries the N6-carboxylysine modification. Position 748 is an N6-acetyllysine (lysine 748). Residues histidine 771 and histidine 773 each contribute to the Mn(2+) site. An N6-acetyllysine modification is found at lysine 892. Threonine 908 lines the substrate pocket. N6-acetyllysine is present on residues lysine 969 and lysine 992. Threonine 1003 bears the Phosphothreonine mark. 3 positions are modified to N6-acetyllysine: lysine 1061, lysine 1090, and lysine 1124. In terms of domain architecture, Biotinyl-binding spans 1109 to 1178; that stretch reads KGQIGAPMPG…EGDDLILEIE (70 aa). Lysine 1144 is modified (N6-biotinyllysine).

Homotetramer. Interacts (via the biotin carboxylation domain) with SIRT4. The cofactor is biotin. Mn(2+) serves as cofactor. Post-translationally, acetylation of Lys-748 might play a role in catalytic activity regulation.

Its subcellular location is the mitochondrion matrix. It catalyses the reaction hydrogencarbonate + pyruvate + ATP = oxaloacetate + ADP + phosphate + H(+). It functions in the pathway carbohydrate biosynthesis; gluconeogenesis. In terms of biological role, pyruvate carboxylase catalyzes a 2-step reaction, involving the ATP-dependent carboxylation of the covalently attached biotin in the first step and the transfer of the carboxyl group to pyruvate in the second. Catalyzes in a tissue specific manner, the initial reactions of glucose (liver, kidney) and lipid (adipose tissue, liver, brain) synthesis from pyruvate. This Homo sapiens (Human) protein is Pyruvate carboxylase, mitochondrial.